The following is a 499-amino-acid chain: Probable cytosol aminopeptidase (499 aa).

Mn(2+) contacts are provided by Lys263 and Asp268. Residue Lys275 is part of the active site. Mn(2+) contacts are provided by Asp286, Asp345, and Glu347. Arg349 is an active-site residue.

Belongs to the peptidase M17 family. The cofactor is Mn(2+).

The protein localises to the cytoplasm. The catalysed reaction is Release of an N-terminal amino acid, Xaa-|-Yaa-, in which Xaa is preferably Leu, but may be other amino acids including Pro although not Arg or Lys, and Yaa may be Pro. Amino acid amides and methyl esters are also readily hydrolyzed, but rates on arylamides are exceedingly low.. It carries out the reaction Release of an N-terminal amino acid, preferentially leucine, but not glutamic or aspartic acids.. In terms of biological role, presumably involved in the processing and regular turnover of intracellular proteins. Catalyzes the removal of unsubstituted N-terminal amino acids from various peptides. The protein is Probable cytosol aminopeptidase (pepA) of Chlamydia trachomatis serovar D (strain ATCC VR-885 / DSM 19411 / UW-3/Cx).